The sequence spans 261 residues: MQLVILRVTIFLPWCFAVPVPPAADHKGWDFVEGYFHQFFLTKKESPLLTQETQTQLLQQFHRNGTDLLDMQMHALLHQPHCGVPDGSDTSISPGRCKWNKHTLTYRIINYPHDMKPSAVKDSIYNAVSIWSNVTPLIFQQVQNGDADIKVSFWQWAHEDGWPFDGPGGILGHAFLPNSGNPGVVHFDKNEHWSASDTGYNLFLVATHEIGHSLGLQHSGNQSSIMYPTYWYHDPRTFQLSADDIQRIQHLYGEKCSSDIP.

The N-terminal stretch at 1–17 is a signal peptide; the sequence is MQLVILRVTIFLPWCFA. Positions 18–89 are excised as a propeptide; it reads VPVPPAADHK…PHCGVPDGSD (72 aa). Residue asparagine 64 is glycosylated (N-linked (GlcNAc...) asparagine). Residues 80–87 carry the Cysteine switch motif; the sequence is PHCGVPDG. Residues cysteine 82 and histidine 208 each contribute to the Zn(2+) site. The active site involves glutamate 209. Histidine 212 and histidine 218 together coordinate Zn(2+). N-linked (GlcNAc...) asparagine glycosylation is present at asparagine 221.

The protein belongs to the peptidase M10A family. Requires Zn(2+) as cofactor. It depends on Ca(2+) as a cofactor. In terms of tissue distribution, expressed specifically in uterus and placenta. Is also widely expressed in malignant tumors from different sources as well as in diverse tumor cell lines.

It localises to the secreted. The protein localises to the extracellular space. The protein resides in the extracellular matrix. Functionally, may hydrolyze collagen type IV, fibronectin, fibrinogen, beta-casein, type I gelatin and alpha-1 proteinase inhibitor. Is also able to activate progelatinase B. The chain is Matrix metalloproteinase-26 (MMP26) from Homo sapiens (Human).